A 309-amino-acid polypeptide reads, in one-letter code: Putative ankyrin repeat protein R603 (309 aa).

ANK repeat units lie at residues 53–82, 83–112, 114–144, 145–176, 177–206, 214–243, and 245–274; these read QVNG…MNPE, NKSQ…DVSL, DHFA…DVTS, NNNL…DIHA, DEYF…DVNM, NVLS…DISF, and DDND…DISF.

The chain is Putative ankyrin repeat protein R603 from Acanthamoeba polyphaga (Amoeba).